Consider the following 269-residue polypeptide: MAVNVYSTSVTSDNLSRHDMLAWINESLQLNLTKIEQLCSGSVYCQFMDMLFPGSVVLKKVKFQAKLEHEYIQNFKVLQAGFKKMGVDKIIPVDKLVKGKFQDNFEFVQWFKKFFDANYDGKDYDPVAARQGQESAPVPVLAAPVLNKPKKPLGSGNTAPQRTVPVQRTAVSNKPPAQGISKKPATVGNGDDESAELIQQINVLKITVEDLEKERDFYFGKLRNIELICQENEGESDPVLQRIIEILYATDEGFVIPDEGAPPEDQEEY.

The region spanning 14-116 (NLSRHDMLAW…FVQWFKKFFD (103 aa)) is the Calponin-homology (CH) domain. A disordered region spans residues 168–190 (RTAVSNKPPAQGISKKPATVGNG). One can recognise an EB1 C-terminal domain in the interval 186–256 (TVGNGDDESA…LYATDEGFVI (71 aa)).

This sequence belongs to the MAPRE family.

The protein resides in the cytoplasm. It is found in the cytoskeleton. The protein localises to the microtubule organizing center. It localises to the centrosome. Its subcellular location is the golgi apparatus. The protein resides in the spindle. It is found in the spindle pole. Plus-end tracking protein (+TIP) that binds to the plus-end of microtubules and regulates the dynamics of the microtubule cytoskeleton. Promotes cytoplasmic microtubule nucleation and elongation. Involved in mitotic spindle positioning by stabilizing microtubules and promoting dynamic connection between astral microtubules and the cortex during mitotic chromosome segregation. The sequence is that of Microtubule-associated protein RP/EB family member 1 (mapre1) from Xenopus tropicalis (Western clawed frog).